Reading from the N-terminus, the 98-residue chain is uncharacterized protein (98 aa).

This sequence belongs to the HHV-5 UL19 protein family.

This is an uncharacterized protein from Human cytomegalovirus (strain AD169) (HHV-5).